A 196-amino-acid polypeptide reads, in one-letter code: Putative 3-methyladenine DNA glycosylase (196 aa).

It belongs to the DNA glycosylase MPG family.

This is Putative 3-methyladenine DNA glycosylase (yxlJ) from Bacillus subtilis (strain 168).